The sequence spans 887 residues: Probable alpha/beta-glucosidase agdC (887 aa).

Residues 1–17 form the signal peptide; that stretch reads MLRSLLLLAPMVGAAVA. 3 N-linked (GlcNAc...) asparagine glycosylation sites follow: Asn171, Asn293, and Asn373. The active-site Nucleophile is Asp422. Glu425 is a catalytic residue. Residues 457-483 form a disordered region; sequence PRPLPGFPDDFQPPAASKRSVAKGSKV. Asp571 acts as the Proton donor in catalysis. Residues Asn747 and Asn879 are each glycosylated (N-linked (GlcNAc...) asparagine).

Belongs to the glycosyl hydrolase 31 family.

The protein resides in the secreted. The enzyme catalyses Hydrolysis of terminal, non-reducing (1-&gt;4)-linked alpha-D-glucose residues with release of alpha-D-glucose.. It carries out the reaction Hydrolysis of terminal, non-reducing beta-D-glucosyl residues with release of beta-D-glucose.. Its function is as follows. Glucosidase involved in the degradation of cellulosic biomass. Has both alpha- and beta-glucosidase activity. This Aspergillus clavatus (strain ATCC 1007 / CBS 513.65 / DSM 816 / NCTC 3887 / NRRL 1 / QM 1276 / 107) protein is Probable alpha/beta-glucosidase agdC (agdC).